A 343-amino-acid polypeptide reads, in one-letter code: Glycerol-3-phosphate dehydrogenase [NAD(P)+] (343 aa).

NADPH contacts are provided by serine 11, tryptophan 12, arginine 32, and lysine 106. 3 residues coordinate sn-glycerol 3-phosphate: lysine 106, glycine 137, and serine 139. NADPH is bound at residue alanine 141. Sn-glycerol 3-phosphate is bound by residues lysine 192, aspartate 245, serine 255, arginine 256, and asparagine 257. Catalysis depends on lysine 192, which acts as the Proton acceptor. Arginine 256 serves as a coordination point for NADPH. Positions 280 and 282 each coordinate NADPH.

Belongs to the NAD-dependent glycerol-3-phosphate dehydrogenase family.

Its subcellular location is the cytoplasm. It catalyses the reaction sn-glycerol 3-phosphate + NAD(+) = dihydroxyacetone phosphate + NADH + H(+). It carries out the reaction sn-glycerol 3-phosphate + NADP(+) = dihydroxyacetone phosphate + NADPH + H(+). The protein operates within membrane lipid metabolism; glycerophospholipid metabolism. Catalyzes the reduction of the glycolytic intermediate dihydroxyacetone phosphate (DHAP) to sn-glycerol 3-phosphate (G3P), the key precursor for phospholipid synthesis. This is Glycerol-3-phosphate dehydrogenase [NAD(P)+] from Syntrophomonas wolfei subsp. wolfei (strain DSM 2245B / Goettingen).